The primary structure comprises 406 residues: CRISP/Allergen/PR-1 (406 aa).

Residues 1 to 18 (MHFQVILMMMWLWLEAEG) form the signal peptide. A glycan (N-linked (GlcNAc...) asparagine) is linked at Asn-39. An SCP domain is found at 58 to 205 (LREHNKLRSR…TFKDLYTCNY (148 aa)).

It belongs to the CRISP family. Post-translationally, contains 9 disulfide bonds. In terms of tissue distribution, expressed by the venom gland.

The protein localises to the secreted. This is CRISP/Allergen/PR-1 from Trittame loki (Brush-footed trapdoor spider).